The following is a 57-amino-acid chain: uncharacterized protein (57 aa).

This is an uncharacterized protein from Archaeoglobus fulgidus (strain ATCC 49558 / DSM 4304 / JCM 9628 / NBRC 100126 / VC-16).